The chain runs to 148 residues: Lysozyme C (148 aa).

A signal peptide spans 1–18; it reads MKAVIILGLVLLSVTVQG. One can recognise a C-type lysozyme domain in the interval 19–148; that stretch reads KIFERCELAR…VSQYVQGCGV (130 aa). Cystine bridges form between Cys24–Cys146, Cys48–Cys134, Cys83–Cys99, and Cys95–Cys113. Residues Glu53 and Asp71 contribute to the active site.

This sequence belongs to the glycosyl hydrolase 22 family. As to quaternary structure, monomer.

The protein localises to the secreted. The catalysed reaction is Hydrolysis of (1-&gt;4)-beta-linkages between N-acetylmuramic acid and N-acetyl-D-glucosamine residues in a peptidoglycan and between N-acetyl-D-glucosamine residues in chitodextrins.. Functionally, lysozymes have primarily a bacteriolytic function; those in tissues and body fluids are associated with the monocyte-macrophage system and enhance the activity of immunoagents. This chain is Lysozyme C (LYZ), found in Papio anubis (Olive baboon).